We begin with the raw amino-acid sequence, 253 residues long: Protein PET20, mitochondrial (253 aa).

The N-terminal 36 residues, 1–36 (MLKLARPFIPPLSRNNAISSGIVLTSRRFQSSFTFL), are a transit peptide targeting the mitochondrion. A disordered region spans residues 44-93 (KNQMKSKRKKGSKKAAYHRQPPEHEHTAPLIKQNKTITKKEHSDVRGSHL). Basic residues predominate over residues 47 to 60 (MKSKRKKGSKKAAY). A compositionally biased stretch (basic and acidic residues) spans 81 to 90 (TKKEHSDVRG).

The protein resides in the mitochondrion. Its function is as follows. Required for respiratory growth, stability of the mitochondrial genome and for proper assembly or maintenance of mitochondrial proteins. In Saccharomyces cerevisiae (strain ATCC 204508 / S288c) (Baker's yeast), this protein is Protein PET20, mitochondrial (PET20).